Consider the following 336-residue polypeptide: 3-isopropylmalate dehydrogenase (336 aa).

Substrate contacts are provided by arginine 87, arginine 97, arginine 121, and aspartate 211. Residues aspartate 211, aspartate 235, and aspartate 239 each contribute to the Mg(2+) site. An NAD(+)-binding site is contributed by 271 to 283 (GSAPDIAGQGIAD).

Belongs to the isocitrate and isopropylmalate dehydrogenases family. LeuB type 2 subfamily. Homodimer. It depends on Mg(2+) as a cofactor. The cofactor is Mn(2+).

Its subcellular location is the cytoplasm. It carries out the reaction (2R,3S)-3-isopropylmalate + NAD(+) = 4-methyl-2-oxopentanoate + CO2 + NADH. It functions in the pathway amino-acid biosynthesis; L-leucine biosynthesis; L-leucine from 3-methyl-2-oxobutanoate: step 3/4. In terms of biological role, catalyzes the oxidation of 3-carboxy-2-hydroxy-4-methylpentanoate (3-isopropylmalate) to 3-carboxy-4-methyl-2-oxopentanoate. The product decarboxylates to 4-methyl-2 oxopentanoate. The protein is 3-isopropylmalate dehydrogenase of Mycolicibacterium vanbaalenii (strain DSM 7251 / JCM 13017 / BCRC 16820 / KCTC 9966 / NRRL B-24157 / PYR-1) (Mycobacterium vanbaalenii).